An 83-amino-acid polypeptide reads, in one-letter code: MALYIKDPTVDRMAEKLQERLGVRTKTDAVRIALQHELDRVEDEIPLREKLAALRQQARDRLGPPVHGIDMKKLMDELWEEGE.

This is an uncharacterized protein from Rhizobium meliloti (strain 1021) (Ensifer meliloti).